Consider the following 201-residue polypeptide: Peptidyl-tRNA hydrolase (201 aa).

Tyrosine 15 contacts tRNA. The active-site Proton acceptor is histidine 20. Residues tyrosine 66, asparagine 68, and asparagine 114 each coordinate tRNA.

The protein belongs to the PTH family. In terms of assembly, monomer.

It is found in the cytoplasm. The catalysed reaction is an N-acyl-L-alpha-aminoacyl-tRNA + H2O = an N-acyl-L-amino acid + a tRNA + H(+). Hydrolyzes ribosome-free peptidyl-tRNAs (with 1 or more amino acids incorporated), which drop off the ribosome during protein synthesis, or as a result of ribosome stalling. In terms of biological role, catalyzes the release of premature peptidyl moieties from peptidyl-tRNA molecules trapped in stalled 50S ribosomal subunits, and thus maintains levels of free tRNAs and 50S ribosomes. In Burkholderia pseudomallei (strain K96243), this protein is Peptidyl-tRNA hydrolase.